Reading from the N-terminus, the 430-residue chain is Sesquiterpene synthase Agr5 (430 aa).

The first 25 residues, 1–25 (MASSLLEPSLAAIALVILLASVSLS), serve as a signal peptide directing secretion. Asn-113 carries an N-linked (GlcNAc...) asparagine glycan. Mg(2+) contacts are provided by Asp-176, Asn-311, Ser-315, and Glu-319. Residues 176-180 (DEYTD) carry the DDXXD motif motif. Residues Arg-401 and Tyr-402 each coordinate (2E,6E)-farnesyl diphosphate.

It belongs to the terpene synthase family. The cofactor is Mg(2+).

It catalyses the reaction (2E,6E)-farnesyl diphosphate = viridiflorene + diphosphate. Its function is as follows. Terpene cyclase that catalyzes the cyclization of farnesyl diphosphate (FPP) to viridiflorene and viridiflorol. This chain is Sesquiterpene synthase Agr5, found in Cyclocybe aegerita (Black poplar mushroom).